Here is a 340-residue protein sequence, read N- to C-terminus: Phosphoribosylformylglycinamidine cyclo-ligase (340 aa).

Belongs to the AIR synthase family.

It localises to the cytoplasm. It catalyses the reaction 2-formamido-N(1)-(5-O-phospho-beta-D-ribosyl)acetamidine + ATP = 5-amino-1-(5-phospho-beta-D-ribosyl)imidazole + ADP + phosphate + H(+). It participates in purine metabolism; IMP biosynthesis via de novo pathway; 5-amino-1-(5-phospho-D-ribosyl)imidazole from N(2)-formyl-N(1)-(5-phospho-D-ribosyl)glycinamide: step 2/2. The protein is Phosphoribosylformylglycinamidine cyclo-ligase of Macrococcus caseolyticus (strain JCSC5402) (Macrococcoides caseolyticum).